We begin with the raw amino-acid sequence, 599 residues long: MLSYLKQNLCFYLSSKILILALAISAIVSACTTFYVISLEAKNFSTIIGFLLIDLAIFLILGILLTQKFFSKNNDNDSSRLQNRIVIAFSLVAAIPTIIVSVFSVYFFNLSVKAWFDKKISTVLDQSVIVAETYIAEHKVQLKETALAVAEDLSDMYYDLIHNPALFTKTLNTEADMRSLDEAIVLNKSTNTIVANSYLSFSLSFATIPAHLIKKADLGEPVEVKSDPTKIRMLIKLKEYNDVYLLVGRLVDNKIIDHIDATNGAAAEYNSLKNEIDNIQIKFSIMFIFIALLLLFVAINFGVLFTAQIVKPIKKLVTATDKVKDGDLTVQVPENEVDKDEIGTLYVAFNRMIKQLSRQQRDLVIAQRAMAWSDVAKKVAHEIKNPLTPILLASERLLKKFSAEIKDKSEFESYLKMIIRHTNDIKNIVSEFVLFARLPAPKFTKSELVYLVKHIIEARKLLNDNIVYTCDSNVDQFDFMCDATQINQVMINVLKNAEESIEGQEFGRIDVILDIKDDFINVIVMDNGKGFPPELIGKATESYVTTSSKGMGVGLAIVKRIVEEHCGVLDIANREDKGAIIDIKFDLKELHLKVRRSCG.

Helical transmembrane passes span 17–37 (ILILALAISAIVSACTTFYVI), 44–64 (FSTIIGFLLIDLAIFLILGIL), 85–105 (IVIAFSLVAAIPTIIVSVFSV), and 285–305 (IMFIFIALLLLFVAINFGVLF). Positions 307–361 (AQIVKPIKKLVTATDKVKDGDLTVQVPENEVDKDEIGTLYVAFNRMIKQLSRQQR) constitute an HAMP domain. Residues 378–589 (KVAHEIKNPL…IIDIKFDLKE (212 aa)) enclose the Histidine kinase domain. At His381 the chain carries Phosphohistidine; by autocatalysis.

The protein localises to the cell membrane. The enzyme catalyses ATP + protein L-histidine = ADP + protein N-phospho-L-histidine.. In terms of biological role, member of the two-component regulatory system RT0603/RT0550. The polypeptide is Putative sensor histidine kinase NtrY-like (Rickettsia typhi (strain ATCC VR-144 / Wilmington)).